The sequence spans 148 residues: uncharacterized protein (148 aa).

Residues 55-148 are disordered; sequence KMRCGESGAG…RNQGQLYPQP (94 aa). Residues 68–104 are compositionally biased toward polar residues; sequence RSNSAEVSSSQPALASKSQSKWGPTSNNPRGALTTTE.

This is an uncharacterized protein from Homo sapiens (Human).